A 464-amino-acid chain; its full sequence is Soluble pyridine nucleotide transhydrogenase (464 aa).

35-44 (DSRRQVGGNC) contacts FAD.

The protein belongs to the class-I pyridine nucleotide-disulfide oxidoreductase family. It depends on FAD as a cofactor.

It is found in the cytoplasm. The enzyme catalyses NAD(+) + NADPH = NADH + NADP(+). Conversion of NADPH, generated by peripheral catabolic pathways, to NADH, which can enter the respiratory chain for energy generation. This is Soluble pyridine nucleotide transhydrogenase from Pseudomonas fluorescens (strain ATCC BAA-477 / NRRL B-23932 / Pf-5).